The following is a 182-amino-acid chain: MTNQQGRLRTRVAVFACVAAAALIVDQLTKAWAMAALSNGQTIRVIPGLLSFTLVRNPGASLGMGSGATWVISLLAVVACVALAVAGVRTISMKWSVALSFAFAGALGNLIDRVMYADGFLNGKVVDFLNYGWSVGNVADIYLVVAGVVLVILILMGEPFSHKDLIEQSDESLQSEPEADAK.

3 consecutive transmembrane segments (helical) span residues Val-12–Trp-32, Ala-68–Val-88, and Ile-91–Ile-111. Residues Asp-127 and Asp-140 contribute to the active site. Residues Val-135 to Leu-155 form a helical membrane-spanning segment.

The protein belongs to the peptidase A8 family.

It localises to the cell membrane. It catalyses the reaction Release of signal peptides from bacterial membrane prolipoproteins. Hydrolyzes -Xaa-Yaa-Zaa-|-(S,diacylglyceryl)Cys-, in which Xaa is hydrophobic (preferably Leu), and Yaa (Ala or Ser) and Zaa (Gly or Ala) have small, neutral side chains.. The protein operates within protein modification; lipoprotein biosynthesis (signal peptide cleavage). Its function is as follows. This protein specifically catalyzes the removal of signal peptides from prolipoproteins. The sequence is that of Lipoprotein signal peptidase from Bifidobacterium longum subsp. infantis (strain ATCC 15697 / DSM 20088 / JCM 1222 / NCTC 11817 / S12).